A 366-amino-acid polypeptide reads, in one-letter code: Anhydro-N-acetylmuramic acid kinase (366 aa).

ATP is bound at residue glycine 12 to aspartate 19.

This sequence belongs to the anhydro-N-acetylmuramic acid kinase family.

It catalyses the reaction 1,6-anhydro-N-acetyl-beta-muramate + ATP + H2O = N-acetyl-D-muramate 6-phosphate + ADP + H(+). It functions in the pathway amino-sugar metabolism; 1,6-anhydro-N-acetylmuramate degradation. The protein operates within cell wall biogenesis; peptidoglycan recycling. In terms of biological role, catalyzes the specific phosphorylation of 1,6-anhydro-N-acetylmuramic acid (anhMurNAc) with the simultaneous cleavage of the 1,6-anhydro ring, generating MurNAc-6-P. Is required for the utilization of anhMurNAc either imported from the medium or derived from its own cell wall murein, and thus plays a role in cell wall recycling. This Nitrosospira multiformis (strain ATCC 25196 / NCIMB 11849 / C 71) protein is Anhydro-N-acetylmuramic acid kinase.